Consider the following 269-residue polypeptide: 3-deoxy-manno-octulosonate cytidylyltransferase (269 aa).

Belongs to the KdsB family.

Its subcellular location is the cytoplasm. The enzyme catalyses 3-deoxy-alpha-D-manno-oct-2-ulosonate + CTP = CMP-3-deoxy-beta-D-manno-octulosonate + diphosphate. It participates in nucleotide-sugar biosynthesis; CMP-3-deoxy-D-manno-octulosonate biosynthesis; CMP-3-deoxy-D-manno-octulosonate from 3-deoxy-D-manno-octulosonate and CTP: step 1/1. It functions in the pathway bacterial outer membrane biogenesis; lipopolysaccharide biosynthesis. Functionally, activates KDO (a required 8-carbon sugar) for incorporation into bacterial lipopolysaccharide in Gram-negative bacteria. In Cupriavidus pinatubonensis (strain JMP 134 / LMG 1197) (Cupriavidus necator (strain JMP 134)), this protein is 3-deoxy-manno-octulosonate cytidylyltransferase.